The chain runs to 75 residues: DNA-directed RNA polymerase subunit omega (75 aa).

Belongs to the RNA polymerase subunit omega family. As to quaternary structure, in cyanobacteria the RNAP catalytic core is composed of 2 alpha, 1 beta, 1 beta', 1 gamma and 1 omega subunit. When a sigma factor is associated with the core the holoenzyme is formed, which can initiate transcription.

The catalysed reaction is RNA(n) + a ribonucleoside 5'-triphosphate = RNA(n+1) + diphosphate. Functionally, promotes RNA polymerase assembly. Latches the N- and C-terminal regions of the beta' subunit thereby facilitating its interaction with the beta and alpha subunits. This chain is DNA-directed RNA polymerase subunit omega, found in Synechococcus sp. (strain CC9605).